Reading from the N-terminus, the 148-residue chain is Deoxyuridine 5'-triphosphate nucleotidohydrolase (148 aa).

Substrate is bound by residues 67–69 (RSG), N80, 84–86 (LID), and M94.

This sequence belongs to the dUTPase family. The cofactor is Mg(2+).

It carries out the reaction dUTP + H2O = dUMP + diphosphate + H(+). It functions in the pathway pyrimidine metabolism; dUMP biosynthesis; dUMP from dCTP (dUTP route): step 2/2. Its function is as follows. This enzyme is involved in nucleotide metabolism: it produces dUMP, the immediate precursor of thymidine nucleotides and it decreases the intracellular concentration of dUTP so that uracil cannot be incorporated into DNA. This chain is Deoxyuridine 5'-triphosphate nucleotidohydrolase, found in Paraburkholderia phytofirmans (strain DSM 17436 / LMG 22146 / PsJN) (Burkholderia phytofirmans).